Here is a 255-residue protein sequence, read N- to C-terminus: Wtf element wtf15 (255 aa).

A disordered region spans residues 19 to 78 (KAGHEIDLEGSPPSEHNSEEKSTLPSNSDILTSANPVSQASETPDHSIESNTGSTQSPTS). Polar residues-rich tracts occupy residues 41-60 (TLPS…QASE) and 67-78 (ESNTGSTQSPTS). 4 helical membrane passes run 85 to 105 (FSFC…CVLP), 112 to 132 (FLIA…SGSI), 162 to 182 (FLKT…LVLL), and 187 to 208 (WGWK…SFCL).

It belongs to the WTF family.

It is found in the spore membrane. May act in meiotic drive. The sequence is that of Wtf element wtf15 from Schizosaccharomyces pombe (strain 972 / ATCC 24843) (Fission yeast).